The chain runs to 486 residues: ATP synthase subunit beta (486 aa).

164–171 (GGAGVGKT) contributes to the ATP binding site.

It belongs to the ATPase alpha/beta chains family. In terms of assembly, F-type ATPases have 2 components, CF(1) - the catalytic core - and CF(0) - the membrane proton channel. CF(1) has five subunits: alpha(3), beta(3), gamma(1), delta(1), epsilon(1). CF(0) has four main subunits: a(1), b(1), b'(1) and c(9-12).

Its subcellular location is the cellular thylakoid membrane. The enzyme catalyses ATP + H2O + 4 H(+)(in) = ADP + phosphate + 5 H(+)(out). Produces ATP from ADP in the presence of a proton gradient across the membrane. The catalytic sites are hosted primarily by the beta subunits. The sequence is that of ATP synthase subunit beta from Prochlorococcus marinus (strain MIT 9215).